A 374-amino-acid chain; its full sequence is SH2 domain-containing protein 2A (374 aa).

The region spanning tryptophan 116–leucine 207 is the SH2 domain. Residues glutamate 213 to proline 232 form a disordered region. Over residues alanine 221 to proline 232 the composition is skewed to basic and acidic residues. Phosphoserine is present on serine 237. The disordered stretch occupies residues glutamine 241–glutamine 301. Residues alanine 256–serine 266 are compositionally biased toward polar residues. An SH3-binding motif is present at residues arginine 267–proline 273. Over residues proline 268 to proline 279 the composition is skewed to pro residues. Serine 316 is modified (phosphoserine). Disordered regions lie at residues proline 321 to proline 340 and glycine 353 to serine 374.

In terms of assembly, interacts with KDR. Interacts with p56-LCK, TXK and ITK. Phosphorylated on tyrosine residues upon TCR-stimulation. Expression limited to tissues of the immune system and, in particular, activated T-cells and natural killer cells. Expressed in the thymus, lymph node, and to a lesser extent, in the spleen and bone marrow. According to PubMed:10553045, also expressed in the lung.

The protein localises to the cytoplasm. It is found in the cell membrane. Its function is as follows. Could be a T-cell-specific adapter protein involved in the control of T-cell activation. May play a role in p56-LCK-mediated T-cell signaling. Could be involved in the regulation of responses to T-cell activation stimuli, specifically proliferation and lymphokine production. Interactions with ITK and TXK may provide important biochemical links of these two important kinases with other components in the T-cell activation machinery. The protein is SH2 domain-containing protein 2A (Sh2d2a) of Mus musculus (Mouse).